A 62-amino-acid chain; its full sequence is uncharacterized protein (62 aa).

This is an uncharacterized protein from Solanum tuberosum (Potato).